A 497-amino-acid chain; its full sequence is UPF0371 protein cu0538 (497 aa).

Belongs to the UPF0371 family.

In Corynebacterium urealyticum (strain ATCC 43042 / DSM 7109), this protein is UPF0371 protein cu0538.